The sequence spans 100 residues: Small ribosomal subunit protein uS14c (100 aa).

It belongs to the universal ribosomal protein uS14 family. Part of the 30S ribosomal subunit.

The protein resides in the plastid. It is found in the chloroplast. In terms of biological role, binds 16S rRNA, required for the assembly of 30S particles. The sequence is that of Small ribosomal subunit protein uS14c from Tetradesmus obliquus (Green alga).